The sequence spans 328 residues: Gonadotropin-releasing hormone receptor (328 aa).

The Extracellular segment spans residues 1–38; that stretch reads MANSASPEQNQNHCSASNSSIPLTQANLPTLTLSGKIR. Asparagine 18 carries N-linked (GlcNAc...) asparagine glycosylation. The helical transmembrane segment at 39–59 threads the bilayer; it reads VTVTFFLFLLSTTFNASFLLK. Over 60–84 the chain is Cytoplasmic; the sequence is LHKWTQKKENGKKLSKMKVLLKHLT. A helical transmembrane segment spans residues 85 to 105; it reads LANLLETLIVMPLDGMWNITV. At 106–115 the chain is on the extracellular side; sequence QWYAGELLCK. Cysteine 114 and cysteine 196 are joined by a disulfide. The helical transmembrane segment at 116–136 threads the bilayer; the sequence is VLSYLKLFSMYAPAFMMVVIS. The Cytoplasmic segment spans residues 137–157; it reads LDRSLAITRPLAVKSNSKLGR. The chain crosses the membrane as a helical span at residues 158 to 178; the sequence is SMIGLAWLLSSIFAGPQLYIF. The Extracellular segment spans residues 179-208; the sequence is RMIHLADSSGQTEGFSQCVTHCSFPQWWHQ. Residues 209–229 form a helical membrane-spanning segment; it reads AFYNFFTFSCLFIIPLLFMLI. Topologically, residues 230 to 271 are cytoplasmic; that stretch reads CNAKIIFTLTRVLHQDPHKLQLNQSKNNIPRARLRTLKMTVA. Residues 272 to 292 form a helical membrane-spanning segment; the sequence is FATSFTVCWTPYYVLGIWYWF. Over 293–306 the chain is Extracellular; that stretch reads DPEMLNRVSDPVNH. Residues 307 to 327 traverse the membrane as a helical segment; that stretch reads FFFLFALLNPCFDPLIYGYFS. Position 328 (leucine 328) is a topological domain, cytoplasmic.

The protein belongs to the G-protein coupled receptor 1 family.

The protein resides in the cell membrane. In terms of biological role, receptor for gonadotropin releasing hormone (GnRH) that mediates the action of GnRH to stimulate the secretion of the gonadotropic hormones luteinizing hormone (LH) and follicle-stimulating hormone (FSH). This receptor mediates its action by association with G-proteins that activate a phosphatidylinositol-calcium second messenger system. The polypeptide is Gonadotropin-releasing hormone receptor (GNRHR) (Equus caballus (Horse)).